The sequence spans 84 residues: Antimicrobial peptide MeuNaTxbeta-2 (84 aa).

Positions 1–20 are cleaved as a signal peptide; it reads MMKTVIVLIVFSLVMIVVKS. Residues 21 to 83 enclose the LCN-type CS-alpha/beta domain; sequence DNGYLLDKYT…LWHYETNRCR (63 aa). 4 disulfides stabilise this stretch: Cys32–Cys82, Cys36–Cys57, Cys43–Cys64, and Cys47–Cys66.

Expressed by the venom gland.

The protein resides in the secreted. Antimicrobial peptide with activity against both Gram-positive and -negative bacteria. The chain is Antimicrobial peptide MeuNaTxbeta-2 from Mesobuthus eupeus (Lesser Asian scorpion).